We begin with the raw amino-acid sequence, 509 residues long: Phosphoglycerate kinase, glycosomal (509 aa).

(2R)-3-phosphoglycerate-binding residues include Val32, Asp33, Phe34, Asn35, Arg48, Ser70, His71, Gly73, Arg74, Arg224, His260, and Arg261. ADP is bound at residue Gly306. Gly306 lines the CDP pocket. Residue Lys308 participates in (2R)-3-phosphoglycerate binding. Lys308 contacts AMP. Residue Asp311 coordinates CDP. Asp311 is a binding site for Mg(2+). 2 residues coordinate ADP: Lys312 and Gly330. Residue Lys312 coordinates AMP. Lys312 lines the ATP pocket. Position 330 (Gly330) interacts with CDP. Residues Ala331 and Ala403 each coordinate AMP. Ala331 and Ala403 together coordinate ATP. Positions 403 and 427 each coordinate ADP. Positions 428 and 433 each coordinate CDP. ADP is bound by residues Phe433, Glu434, Asp466, and Ser467. Glu434 is a binding site for AMP. Residues Glu434, Asp466, and Ser467 each contribute to the ATP site. Residue Asp466 coordinates Mg(2+).

This sequence belongs to the phosphoglycerate kinase family. Monomer. The cofactor is Mg(2+).

The protein resides in the glycosome. The catalysed reaction is (2R)-3-phosphoglycerate + ATP = (2R)-3-phospho-glyceroyl phosphate + ADP. It functions in the pathway carbohydrate degradation; glycolysis; pyruvate from D-glyceraldehyde 3-phosphate: step 2/5. The protein is Phosphoglycerate kinase, glycosomal (56PGK) of Trypanosoma congolense.